The primary structure comprises 193 residues: Riboflavin kinase (193 aa).

An H-T-H motif-like region spans residues 1–59; that stretch reads MGISQQAASQHLRELEDEGLITRNAEGKGISVMVTDKGRHELLRVYNILHDSLHSRPDH. Residues 60-193 form a riboflavin kinase region; that stretch reads VEITGTLVSG…TIRIPLEQED (134 aa). 69–74 contacts CDP; the sequence is GMNEGA. Mg(2+) is bound by residues T98 and N100. The FMN site is built by T156 and E164. 169–172 is a CDP binding site; sequence LDIR.

Belongs to the archaeal riboflavin kinase family. The cofactor is Mg(2+).

It carries out the reaction riboflavin + CTP = CDP + FMN + H(+). Its pathway is cofactor biosynthesis; FMN biosynthesis; FMN from riboflavin (CTP route): step 1/1. Its function is as follows. Catalyzes the CTP-dependent phosphorylation of riboflavin (vitamin B2) to form flavin mononucleotide (FMN). The polypeptide is Riboflavin kinase (ribK) (Cenarchaeum symbiosum (strain A)).